The primary structure comprises 307 residues: tRNA pseudouridine synthase B (307 aa).

The active-site Nucleophile is D41.

This sequence belongs to the pseudouridine synthase TruB family. Type 1 subfamily.

The enzyme catalyses uridine(55) in tRNA = pseudouridine(55) in tRNA. Functionally, responsible for synthesis of pseudouridine from uracil-55 in the psi GC loop of transfer RNAs. The sequence is that of tRNA pseudouridine synthase B from Prochlorococcus marinus (strain AS9601).